Here is a 347-residue protein sequence, read N- to C-terminus: Transcription termination/antitermination protein NusA (347 aa).

The S1 motif domain maps to 112–184 (GEIVAGVIQR…REPLITLSRT (73 aa)). The KH domain occupies 287–347 (ARAARVVVPD…GVSRGMAHDR (61 aa)). Residues 322 to 347 (DIRGDAPPPPPGQPEPGVSRGMAHDR) are disordered.

Belongs to the NusA family. Monomer. Binds directly to the core enzyme of the DNA-dependent RNA polymerase and to nascent RNA.

The protein resides in the cytoplasm. Its function is as follows. Participates in both transcription termination and antitermination. This chain is Transcription termination/antitermination protein NusA, found in Mycobacterium bovis (strain ATCC BAA-935 / AF2122/97).